We begin with the raw amino-acid sequence, 251 residues long: Elongation factor Ts (251 aa).

An involved in Mg(2+) ion dislocation from EF-Tu region spans residues 82 to 85; sequence TDFV. The disordered stretch occupies residues 215 to 251; that stretch reads QMGQKAPEPVAAAPQVEEKAPEPAAKDNPPAKGKKKK. A compositionally biased stretch (low complexity) spans 219–229; it reads KAPEPVAAAPQ. Positions 230 to 239 are enriched in basic and acidic residues; the sequence is VEEKAPEPAA.

This sequence belongs to the EF-Ts family.

It localises to the cytoplasm. Associates with the EF-Tu.GDP complex and induces the exchange of GDP to GTP. It remains bound to the aminoacyl-tRNA.EF-Tu.GTP complex up to the GTP hydrolysis stage on the ribosome. This Microcystis aeruginosa (strain NIES-843 / IAM M-2473) protein is Elongation factor Ts.